The sequence spans 101 residues: Small ribosomal subunit protein uS14 (101 aa).

It belongs to the universal ribosomal protein uS14 family. In terms of assembly, part of the 30S ribosomal subunit. Contacts proteins S3 and S10.

Binds 16S rRNA, required for the assembly of 30S particles and may also be responsible for determining the conformation of the 16S rRNA at the A site. This chain is Small ribosomal subunit protein uS14, found in Pseudomonas putida (strain W619).